Reading from the N-terminus, the 528-residue chain is (R)-citramalate synthase (528 aa).

One can recognise a Pyruvate carboxyltransferase domain in the interval 4–266; sequence VKLYDTTLRD…RECIGDDQLR (263 aa).

The protein belongs to the alpha-IPM synthase/homocitrate synthase family.

It catalyses the reaction pyruvate + acetyl-CoA + H2O = (3R)-citramalate + CoA + H(+). The protein operates within amino-acid biosynthesis; L-isoleucine biosynthesis; 2-oxobutanoate from pyruvate: step 1/3. Functionally, catalyzes the condensation of pyruvate and acetyl-coenzyme A to form (R)-citramalate. Makes part of the main pathway for isoleucine biosynthesis in G.sulfurreducens, i.e. the citramalate-dependent pathway. The polypeptide is (R)-citramalate synthase (Geobacter sulfurreducens (strain ATCC 51573 / DSM 12127 / PCA)).